A 277-amino-acid chain; its full sequence is Bifunctional protein FolD (277 aa).

Residues 164-166 (GRS), Ser189, and Thr230 contribute to the NADP(+) site.

The protein belongs to the tetrahydrofolate dehydrogenase/cyclohydrolase family. As to quaternary structure, homodimer.

The enzyme catalyses (6R)-5,10-methylene-5,6,7,8-tetrahydrofolate + NADP(+) = (6R)-5,10-methenyltetrahydrofolate + NADPH. It carries out the reaction (6R)-5,10-methenyltetrahydrofolate + H2O = (6R)-10-formyltetrahydrofolate + H(+). It functions in the pathway one-carbon metabolism; tetrahydrofolate interconversion. Its function is as follows. Catalyzes the oxidation of 5,10-methylenetetrahydrofolate to 5,10-methenyltetrahydrofolate and then the hydrolysis of 5,10-methenyltetrahydrofolate to 10-formyltetrahydrofolate. This chain is Bifunctional protein FolD, found in Clostridium perfringens (strain ATCC 13124 / DSM 756 / JCM 1290 / NCIMB 6125 / NCTC 8237 / Type A).